Reading from the N-terminus, the 107-residue chain is UPF0145 protein YbjQ (107 aa).

It belongs to the UPF0145 family.

The chain is UPF0145 protein YbjQ from Shigella flexneri.